A 593-amino-acid polypeptide reads, in one-letter code: Dihydroxy-acid dehydratase (593 aa).

Over residues 1 to 17 (MSQQTEPDDDAALDGDE) the composition is skewed to acidic residues. Positions 1–40 (MSQQTEPDDDAALDGDEPGAYGKDERLRSREVTEGPERAP) are disordered. The segment covering 22–40 (GKDERLRSREVTEGPERAP) has biased composition (basic and acidic residues). Cysteine 72 serves as a coordination point for [2Fe-2S] cluster. Aspartate 104 contributes to the Mg(2+) binding site. [2Fe-2S] cluster is bound at residue cysteine 145. The Mg(2+) site is built by aspartate 146 and lysine 147. An N6-carboxylysine modification is found at lysine 147. A [2Fe-2S] cluster-binding site is contributed by cysteine 217. Glutamate 475 is a binding site for Mg(2+). Residue serine 501 is the Proton acceptor of the active site.

Belongs to the IlvD/Edd family. In terms of assembly, homodimer. [2Fe-2S] cluster serves as cofactor. The cofactor is Mg(2+).

It carries out the reaction (2R)-2,3-dihydroxy-3-methylbutanoate = 3-methyl-2-oxobutanoate + H2O. It catalyses the reaction (2R,3R)-2,3-dihydroxy-3-methylpentanoate = (S)-3-methyl-2-oxopentanoate + H2O. The protein operates within amino-acid biosynthesis; L-isoleucine biosynthesis; L-isoleucine from 2-oxobutanoate: step 3/4. It participates in amino-acid biosynthesis; L-valine biosynthesis; L-valine from pyruvate: step 3/4. Its function is as follows. Functions in the biosynthesis of branched-chain amino acids. Catalyzes the dehydration of (2R,3R)-2,3-dihydroxy-3-methylpentanoate (2,3-dihydroxy-3-methylvalerate) into 2-oxo-3-methylpentanoate (2-oxo-3-methylvalerate) and of (2R)-2,3-dihydroxy-3-methylbutanoate (2,3-dihydroxyisovalerate) into 2-oxo-3-methylbutanoate (2-oxoisovalerate), the penultimate precursor to L-isoleucine and L-valine, respectively. The polypeptide is Dihydroxy-acid dehydratase (Natronomonas pharaonis (strain ATCC 35678 / DSM 2160 / CIP 103997 / JCM 8858 / NBRC 14720 / NCIMB 2260 / Gabara) (Halobacterium pharaonis)).